Reading from the N-terminus, the 343-residue chain is Probable beta-1,3-galactosyltransferase 13 (343 aa).

The chain crosses the membrane as a helical; Signal-anchor for type II membrane protein span at residues 22–42; it reads LIVFTSLAIGLTGFLFGLSTI. Residue Asn-265 is glycosylated (N-linked (GlcNAc...) asparagine).

It belongs to the glycosyltransferase 31 family. Requires Mn(2+) as cofactor.

The protein resides in the golgi apparatus membrane. Its pathway is protein modification; protein glycosylation. Its function is as follows. Beta-1,3-galactosyltransferase that transfers galactose from UDP-galactose to substrates with a terminal glycosyl residue. The chain is Probable beta-1,3-galactosyltransferase 13 (B3GALT13) from Arabidopsis thaliana (Mouse-ear cress).